Consider the following 437-residue polypeptide: CCA-adding enzyme (437 aa).

Residues Ser-47 and Arg-50 each contribute to the ATP site. Residues Ser-47 and Arg-50 each coordinate CTP. Residues Glu-59, Asp-61, and Asp-110 each contribute to the Mg(2+) site. His-133, Lys-152, and Tyr-161 together coordinate ATP. 3 residues coordinate CTP: His-133, Lys-152, and Tyr-161.

Belongs to the tRNA nucleotidyltransferase/poly(A) polymerase family. Archaeal CCA-adding enzyme subfamily. In terms of assembly, homodimer. The cofactor is Mg(2+).

The catalysed reaction is a tRNA precursor + 2 CTP + ATP = a tRNA with a 3' CCA end + 3 diphosphate. It carries out the reaction a tRNA with a 3' CCA end + 2 CTP + ATP = a tRNA with a 3' CCACCA end + 3 diphosphate. Catalyzes the addition and repair of the essential 3'-terminal CCA sequence in tRNAs without using a nucleic acid template. Adds these three nucleotides in the order of C, C, and A to the tRNA nucleotide-73, using CTP and ATP as substrates and producing inorganic pyrophosphate. tRNA 3'-terminal CCA addition is required both for tRNA processing and repair. Also involved in tRNA surveillance by mediating tandem CCA addition to generate a CCACCA at the 3' terminus of unstable tRNAs. While stable tRNAs receive only 3'-terminal CCA, unstable tRNAs are marked with CCACCA and rapidly degraded. The structural flexibility of RNA controls the choice between CCA versus CCACCA addition: following the first CCA addition cycle, nucleotide-binding to the active site triggers a clockwise screw motion, producing torque on the RNA. This ejects stable RNAs, whereas unstable RNAs are refolded while bound to the enzyme and subjected to a second CCA catalytic cycle. The sequence is that of CCA-adding enzyme from Archaeoglobus fulgidus (strain ATCC 49558 / DSM 4304 / JCM 9628 / NBRC 100126 / VC-16).